The following is a 370-amino-acid chain: Cytochrome b (370 aa).

Helical transmembrane passes span 25-45 (FGSM…FLAV), 69-90 (WMMQ…YIHI), 105-125 (WLSG…GYVL), and 170-190 (FFAL…LHIL). Heme b is bound by residues His-75 and His-89. Positions 174 and 188 each coordinate heme b. Residue His-193 participates in a ubiquinone binding. Helical transmembrane passes span 218-238 (YKDM…VSFF), 280-300 (LGGA…PFTH), 312-332 (FMQL…WTAT), and 339-358 (FTTI…ISNP).

Belongs to the cytochrome b family. As to quaternary structure, the cytochrome bc1 complex contains 3 respiratory subunits (MT-CYB, CYC1 and UQCRFS1), 2 core proteins (UQCRC1 and UQCRC2) and probably 6 low-molecular weight proteins. Heme b serves as cofactor.

The protein resides in the mitochondrion inner membrane. Functionally, component of the ubiquinol-cytochrome c reductase complex (complex III or cytochrome b-c1 complex) that is part of the mitochondrial respiratory chain. The b-c1 complex mediates electron transfer from ubiquinol to cytochrome c. Contributes to the generation of a proton gradient across the mitochondrial membrane that is then used for ATP synthesis. This chain is Cytochrome b (MT-CYB), found in Chilabothrus exsul (Abaco Island boa).